Consider the following 257-residue polypeptide: UPF0246 protein Sbal195_1149 (257 aa).

This sequence belongs to the UPF0246 family.

The polypeptide is UPF0246 protein Sbal195_1149 (Shewanella baltica (strain OS195)).